The following is a 270-amino-acid chain: Phosphatidylglycerol--prolipoprotein diacylglyceryl transferase (270 aa).

The next 7 membrane-spanning stretches (helical) occupy residues 14–34, 60–80, 103–123, 133–153, 181–201, 209–229, and 235–255; these read VAFT…ILAL, YFFW…IAIY, FVGI…LATI, LWQL…FGRI, PSQL…LFFY, GELI…CEFF, and GIGF…LMFF. R152 is a binding site for a 1,2-diacyl-sn-glycero-3-phospho-(1'-sn-glycerol).

It belongs to the Lgt family.

It localises to the cell inner membrane. It carries out the reaction L-cysteinyl-[prolipoprotein] + a 1,2-diacyl-sn-glycero-3-phospho-(1'-sn-glycerol) = an S-1,2-diacyl-sn-glyceryl-L-cysteinyl-[prolipoprotein] + sn-glycerol 1-phosphate + H(+). Its pathway is protein modification; lipoprotein biosynthesis (diacylglyceryl transfer). Functionally, catalyzes the transfer of the diacylglyceryl group from phosphatidylglycerol to the sulfhydryl group of the N-terminal cysteine of a prolipoprotein, the first step in the formation of mature lipoproteins. This chain is Phosphatidylglycerol--prolipoprotein diacylglyceryl transferase, found in Campylobacter curvus (strain 525.92).